The chain runs to 259 residues: Pimeloyl-[acyl-carrier protein] methyl ester esterase (259 aa).

The 229-residue stretch at 16-244 (LVFIHGWGLN…ASHAPFLSHP (229 aa)) folds into the AB hydrolase-1 domain. Substrate-binding positions include Trp-22, 82-83 (SL), and 143-147 (FFNIQ). Ser-82 acts as the Nucleophile in catalysis. Active-site residues include Asp-207 and His-237. A substrate-binding site is contributed by His-237.

Belongs to the AB hydrolase superfamily. Carboxylesterase BioH family. In terms of assembly, monomer.

The protein resides in the cytoplasm. The enzyme catalyses 6-carboxyhexanoyl-[ACP] methyl ester + H2O = 6-carboxyhexanoyl-[ACP] + methanol + H(+). Its pathway is cofactor biosynthesis; biotin biosynthesis. In terms of biological role, the physiological role of BioH is to remove the methyl group introduced by BioC when the pimeloyl moiety is complete. It allows to synthesize pimeloyl-ACP via the fatty acid synthetic pathway through the hydrolysis of the ester bonds of pimeloyl-ACP esters. The polypeptide is Pimeloyl-[acyl-carrier protein] methyl ester esterase (Wigglesworthia glossinidia brevipalpis).